The following is a 614-amino-acid chain: Probable NOT transcription complex subunit VIP2 (614 aa).

Disordered stretches follow at residues 1 to 46 (MSNL…NLQG), 58 to 89 (NMQGTLTSRNSSMNSIPSAGVQQPNGSFSSGR), and 361 to 391 (NLGATYSSHRPQQQPQHTSSTGGLQGLGLRP). Residues 364–381 (ATYSSHRPQQQPQHTSST) show a composition bias toward polar residues.

Belongs to the CNOT2/3/5 family. In terms of assembly, interacts with Agrobacterium tumefaciens VirE2. Binds to VIP1. Forms a complex made of Agrobacterium VirE2, VIP1, VIP2 and single-stranded DNA (ssDNA).

The protein localises to the nucleus. In terms of biological role, transcriptional regulator required for Agrobacterium-mediated stable genetic transformation by T-DNA integration in host genome, but not for T-DNA transient expression. The protein is Probable NOT transcription complex subunit VIP2 (VIP2) of Arabidopsis thaliana (Mouse-ear cress).